Consider the following 207-residue polypeptide: Interleukin-6 (207 aa).

A signal peptide spans 1–20 (MNSLSTSAFSLGLLLVMATA). A disulfide bond links Cys-67 and Cys-73. The residue at position 76 (Ser-76) is a Phosphoserine. Cys-96 and Cys-106 form a disulfide bridge.

Belongs to the IL-6 superfamily. In terms of assembly, component of a hexamer of two molecules each of IL6, IL6R and IL6ST; first binds to IL6R to associate with the signaling subunit IL6ST. Interacts with IL6R (via the N-terminal ectodomain); this interaction may be affected by IL6R-binding with SORL1, hence decreasing IL6 cis signaling. Interacts with SORL1 (via the N-terminal ectodomain); this interaction leads to IL6 internalization and lysosomal degradation. May form a trimeric complex with the soluble SORL1 ectodomain and soluble IL6R receptor; this interaction might stabilize circulating IL6, hence promoting IL6 trans signaling.

It localises to the secreted. Functionally, cytokine with a wide variety of biological functions in immunity, tissue regeneration, and metabolism. Binds to IL6R, then the complex associates to the signaling subunit IL6ST/gp130 to trigger the intracellular IL6-signaling pathway. The interaction with the membrane-bound IL6R and IL6ST stimulates 'classic signaling', whereas the binding of IL6 and soluble IL6R to IL6ST stimulates 'trans-signaling'. Alternatively, 'cluster signaling' occurs when membrane-bound IL6:IL6R complexes on transmitter cells activate IL6ST receptors on neighboring receiver cells. Its function is as follows. IL6 is a potent inducer of the acute phase response. Rapid production of IL6 contributes to host defense during infection and tissue injury, but excessive IL6 synthesis is involved in disease pathology. In the innate immune response, is synthesized by myeloid cells, such as macrophages and dendritic cells, upon recognition of pathogens through toll-like receptors (TLRs) at the site of infection or tissue injury. In the adaptive immune response, is required for the differentiation of B cells into immunoglobulin-secreting cells. Plays a major role in the differentiation of CD4(+) T cell subsets. Essential factor for the development of T follicular helper (Tfh) cells that are required for the induction of germinal-center formation. Required to drive naive CD4(+) T cells to the Th17 lineage. Also required for proliferation of myeloma cells and the survival of plasmablast cells. Acts as an essential factor in bone homeostasis and on vessels directly or indirectly by induction of VEGF, resulting in increased angiogenesis activity and vascular permeability. Induces, through 'trans-signaling' and synergistically with IL1B and TNF, the production of VEGF. Involved in metabolic controls, is discharged into the bloodstream after muscle contraction increasing lipolysis and improving insulin resistance. 'Trans-signaling' in central nervous system also regulates energy and glucose homeostasis. Mediates, through GLP-1, crosstalk between insulin-sensitive tissues, intestinal L cells and pancreatic islets to adapt to changes in insulin demand. Also acts as a myokine. Plays a protective role during liver injury, being required for maintenance of tissue regeneration. Also has a pivotal role in iron metabolism by regulating HAMP/hepcidin expression upon inflammation or bacterial infection. Through activation of IL6ST-YAP-NOTCH pathway, induces inflammation-induced epithelial regeneration. This Canis lupus familiaris (Dog) protein is Interleukin-6 (IL6).